Here is a 515-residue protein sequence, read N- to C-terminus: Elongation factor 1-alpha S (515 aa).

A tr-type G domain is found at 5 to 258; the sequence is KTHINLVVIG…DAMKPPKRPT (254 aa). Positions 14 to 21 are G1; that stretch reads GHVDAGKS. Residue 14 to 21 coordinates GTP; the sequence is GHVDAGKS. An N6,N6-dimethyllysine modification is found at lysine 55. The G2 stretch occupies residues 70 to 74; the sequence is GITID. N6,N6,N6-trimethyllysine is present on lysine 79. Residues 91–94 form a G3 region; that stretch reads DAPG. GTP contacts are provided by residues 91–95 and 151–154; these read DAPGH and NKMD. A G4 region spans residues 151-154; the sequence is NKMD. The disordered stretch occupies residues 187-206; that stretch reads KKDKGDKKKGDKKEKKDKKD. The span at 189–206 shows a compositional bias: basic and acidic residues; sequence DKGDKKKGDKKEKKDKKD. The tract at residues 222 to 224 is G5; it reads SGW. An N6-methyllysine modification is found at lysine 289. Position 334 is an N6,N6,N6-trimethyllysine (lysine 334). Residues 396–419 form a disordered region; the sequence is KRGKQTHDVSDDTEWATKDDAEPR. Residues 398-419 are compositionally biased toward basic and acidic residues; it reads GKQTHDVSDDTEWATKDDAEPR. Lysine 441 bears the N6,N6,N6-trimethyllysine mark.

Belongs to the TRAFAC class translation factor GTPase superfamily. Classic translation factor GTPase family. EF-Tu/EF-1A subfamily.

The protein localises to the cytoplasm. Its function is as follows. This protein promotes the GTP-dependent binding of aminoacyl-tRNA to the A-site of ribosomes during protein biosynthesis. The polypeptide is Elongation factor 1-alpha S (TEF-S) (Porphyra purpurea (Red seaweed)).